The primary structure comprises 154 residues: UPF0178 protein GDI0551/Gdia_1457 (154 aa).

This sequence belongs to the UPF0178 family.

This Gluconacetobacter diazotrophicus (strain ATCC 49037 / DSM 5601 / CCUG 37298 / CIP 103539 / LMG 7603 / PAl5) protein is UPF0178 protein GDI0551/Gdia_1457.